Reading from the N-terminus, the 350-residue chain is MTKHYLNSKYQSEQRSSAMKKITMGTASIILGSLVYIGADSQQVNAATEATNATNNQSTQVSQATSQPINFQVQKDGSSEKSHMDDYMQHPGKVIKQNNKYYFQTVLNNASFWKEYKFYNANNQELATTVVNDNKKADTRTINVAVEPGYKSLTTKVHIVVPQINYNHRYTTHLEFEKAIPTLADAAKPNNVKPVQPKPAQPKTPTEQTKPVQPKVEKVKPTVTTTSKVEDNHSTKVVSTDTTKDQTKTQTAHTVKTAQTAQEQNKVQTPVKDVATAKSESNNQAVSDNKSQQTNKVTKHNETPKQASKAKELPKTGLTSVDNFISTVAFATLALLGSLSLLLFKRKESK.

A signal peptide spans 1-46 (MTKHYLNSKYQSEQRSSAMKKITMGTASIILGSLVYIGADSQQVNA). Positions 62-184 (SQATSQPINF…EFEKAIPTLA (123 aa)) constitute an NEAT domain. Heme-binding residues include lysine 75, serine 82, and tyrosine 166. Residues 188–314 (KPNNVKPVQP…KQASKAKELP (127 aa)) are disordered. Positions 203-214 (KTPTEQTKPVQP) are enriched in low complexity. Polar residues-rich tracts occupy residues 252–268 (AHTV…NKVQ) and 278–296 (KSES…QTNK). Residues 299 to 314 (KHNETPKQASKAKELP) are compositionally biased toward basic and acidic residues. Residues 313-317 (LPKTG) carry the LPXTG sorting signal motif. The residue at position 316 (threonine 316) is a Pentaglycyl murein peptidoglycan amidated threonine. A propeptide spans 317 to 350 (GLTSVDNFISTVAFATLALLGSLSLLLFKRKESK) (removed by sortase A).

This sequence belongs to the IsdA family. Monomer. Interacts with IsdC. Interacts with IsdB.

Its subcellular location is the secreted. The protein resides in the cell wall. Cell wall-anchored surface receptor that participates in the extraction of heme from oxidized methemoglobin/metHb to enable growth on hemoglobin as a sole iron source. Receives heme from IsdB and transfers it to IsdC. Also plays a role in the inhibition of host immune response. Protects S.aureus against the bactericidal protease activity of apolactoferrin. Decreases bacterial cellular hydrophobicity, which renders S.aureus resistant to bactericidal human skin fatty acids as well as to beta-defensins and cathelicidin. Also binds fibronectin and chains B-beta and gamma of fibrinogen, promoting clumping of S.aureus with fibrinogen. Involved in adherence of S.aureus to human desquamated nasal epithelial cells and is required for nasal colonization. The sequence is that of Iron-regulated surface determinant protein A (isdA) from Staphylococcus aureus (strain Mu3 / ATCC 700698).